The following is a 193-amino-acid chain: Peptidyl-tRNA hydrolase (193 aa).

Y16 contributes to the tRNA binding site. The active-site Proton acceptor is the H21. F67, N69, and N115 together coordinate tRNA.

This sequence belongs to the PTH family. In terms of assembly, monomer.

It localises to the cytoplasm. It catalyses the reaction an N-acyl-L-alpha-aminoacyl-tRNA + H2O = an N-acyl-L-amino acid + a tRNA + H(+). Hydrolyzes ribosome-free peptidyl-tRNAs (with 1 or more amino acids incorporated), which drop off the ribosome during protein synthesis, or as a result of ribosome stalling. In terms of biological role, catalyzes the release of premature peptidyl moieties from peptidyl-tRNA molecules trapped in stalled 50S ribosomal subunits, and thus maintains levels of free tRNAs and 50S ribosomes. The chain is Peptidyl-tRNA hydrolase from Psychrobacter arcticus (strain DSM 17307 / VKM B-2377 / 273-4).